A 154-amino-acid chain; its full sequence is RNA-binding protein PAB1135 (154 aa).

Homodimer in solution.

Functionally, in vitro, binds efficiently double-stranded RNAs in a non-sequence specific manner. The chain is RNA-binding protein PAB1135 from Pyrococcus abyssi (strain GE5 / Orsay).